Consider the following 419-residue polypeptide: Histidine--tRNA ligase (419 aa).

Belongs to the class-II aminoacyl-tRNA synthetase family.

Its subcellular location is the cytoplasm. It catalyses the reaction tRNA(His) + L-histidine + ATP = L-histidyl-tRNA(His) + AMP + diphosphate + H(+). This is Histidine--tRNA ligase from Pyrobaculum arsenaticum (strain DSM 13514 / JCM 11321 / PZ6).